The sequence spans 156 residues: Crossover junction endodeoxyribonuclease RuvC (156 aa).

Active-site residues include aspartate 7, glutamate 66, and aspartate 138. Aspartate 7, glutamate 66, and aspartate 138 together coordinate Mg(2+).

It belongs to the RuvC family. In terms of assembly, homodimer which binds Holliday junction (HJ) DNA. The HJ becomes 2-fold symmetrical on binding to RuvC with unstacked arms; it has a different conformation from HJ DNA in complex with RuvA. In the full resolvosome a probable DNA-RuvA(4)-RuvB(12)-RuvC(2) complex forms which resolves the HJ. Mg(2+) serves as cofactor.

Its subcellular location is the cytoplasm. The enzyme catalyses Endonucleolytic cleavage at a junction such as a reciprocal single-stranded crossover between two homologous DNA duplexes (Holliday junction).. The RuvA-RuvB-RuvC complex processes Holliday junction (HJ) DNA during genetic recombination and DNA repair. Endonuclease that resolves HJ intermediates. Cleaves cruciform DNA by making single-stranded nicks across the HJ at symmetrical positions within the homologous arms, yielding a 5'-phosphate and a 3'-hydroxyl group; requires a central core of homology in the junction. The consensus cleavage sequence is 5'-(A/T)TT(C/G)-3'. Cleavage occurs on the 3'-side of the TT dinucleotide at the point of strand exchange. HJ branch migration catalyzed by RuvA-RuvB allows RuvC to scan DNA until it finds its consensus sequence, where it cleaves and resolves the cruciform DNA. This chain is Crossover junction endodeoxyribonuclease RuvC, found in Ehrlichia canis (strain Jake).